We begin with the raw amino-acid sequence, 276 residues long: NAD-capped RNA hydrolase NudC (276 aa).

A substrate-binding site is contributed by arginine 82. Zn(2+) contacts are provided by cysteine 112 and cysteine 115. A substrate-binding site is contributed by glutamate 125. Residues cysteine 130 and cysteine 133 each coordinate Zn(2+). Tyrosine 138 serves as a coordination point for substrate. The 124-residue stretch at 139–262 (PRISPSMIVL…SIARYLIDLY (124 aa)) folds into the Nudix hydrolase domain. A divalent metal cation-binding residues include alanine 172, glutamate 188, and glutamate 192. The Nudix box signature appears at 173–194 (GFAEPGESAEDCLVREVREEVA). 206 to 213 (QCWPFPHS) lines the substrate pocket. Residue glutamate 233 participates in a divalent metal cation binding. Substrate is bound at residue alanine 255.

The protein belongs to the Nudix hydrolase family. NudC subfamily. In terms of assembly, homodimer. Mg(2+) serves as cofactor. It depends on Mn(2+) as a cofactor. Zn(2+) is required as a cofactor.

The enzyme catalyses a 5'-end NAD(+)-phospho-ribonucleoside in mRNA + H2O = a 5'-end phospho-adenosine-phospho-ribonucleoside in mRNA + beta-nicotinamide D-ribonucleotide + 2 H(+). The catalysed reaction is NAD(+) + H2O = beta-nicotinamide D-ribonucleotide + AMP + 2 H(+). It catalyses the reaction NADH + H2O = reduced beta-nicotinamide D-ribonucleotide + AMP + 2 H(+). MRNA decapping enzyme that specifically removes the nicotinamide adenine dinucleotide (NAD) cap from a subset of mRNAs by hydrolyzing the diphosphate linkage to produce nicotinamide mononucleotide (NMN) and 5' monophosphate mRNA. The NAD-cap is present at the 5'-end of some mRNAs and stabilizes RNA against 5'-processing. Has preference for mRNAs with a 5'-end purine. Catalyzes the hydrolysis of a broad range of dinucleotide pyrophosphates. The sequence is that of NAD-capped RNA hydrolase NudC from Pseudomonas putida (strain W619).